A 335-amino-acid chain; its full sequence is NADH-quinone oxidoreductase subunit H (335 aa).

Helical transmembrane passes span 12–32, 81–101, 114–134, 154–174, 187–207, 238–258, 270–290, and 307–327; these read IIAVVKAIVVLLAVVVCGALL, VIFTLAPVVAMSALLIAFAVI, IGLLFFFAMAGLSVYAVLFAG, VSYEVFMGLALMGIVVQVGSF, LWFIIPQFFGFCTFFIAGVAV, FFVGEYIGIILISALLVTLFF, SLAFFWFALKTAFFIMLFILL, and WKFCLPLTLINLLVTAAIVLL.

It belongs to the complex I subunit 1 family. In terms of assembly, NDH-1 is composed of 13 different subunits. Subunits NuoA, H, J, K, L, M, N constitute the membrane sector of the complex.

The protein localises to the cell inner membrane. The catalysed reaction is a quinone + NADH + 5 H(+)(in) = a quinol + NAD(+) + 4 H(+)(out). Functionally, NDH-1 shuttles electrons from NADH, via FMN and iron-sulfur (Fe-S) centers, to quinones in the respiratory chain. The immediate electron acceptor for the enzyme in this species is believed to be ubiquinone. Couples the redox reaction to proton translocation (for every two electrons transferred, four hydrogen ions are translocated across the cytoplasmic membrane), and thus conserves the redox energy in a proton gradient. This subunit may bind ubiquinone. This Pseudomonas syringae pv. syringae (strain B728a) protein is NADH-quinone oxidoreductase subunit H.